The sequence spans 384 residues: L-lactate dehydrogenase (384 aa).

Residues 1-380 (MIISSSNDYR…NESCLVEMNK (380 aa)) form the FMN hydroxy acid dehydrogenase domain. Tyr-24 is a substrate binding site. FMN-binding residues include Ser-106 and Gln-127. A substrate-binding site is contributed by Tyr-129. Thr-155 contributes to the FMN binding site. Arg-164 provides a ligand contact to substrate. FMN is bound at residue Lys-251. His-275 (proton acceptor) is an active-site residue. Arg-278 provides a ligand contact to substrate. An FMN-binding site is contributed by 306 to 330 (DSGIRNGLDVVRMLALGADSVMLGR).

The protein belongs to the FMN-dependent alpha-hydroxy acid dehydrogenase family. FMN is required as a cofactor.

It is found in the cell inner membrane. The enzyme catalyses (S)-lactate + A = pyruvate + AH2. Its function is as follows. Catalyzes the conversion of L-lactate to pyruvate. Is coupled to the respiratory chain. This chain is L-lactate dehydrogenase, found in Acinetobacter baylyi (strain ATCC 33305 / BD413 / ADP1).